Reading from the N-terminus, the 510-residue chain is Anaerobic nitric oxide reductase transcription regulator NorR (510 aa).

The Sigma-54 factor interaction domain occupies 188 to 417 (IIGNSQGMRT…LEHVIKRAAV (230 aa)). ATP is bound by residues 216 to 223 (GETGVGKE) and 279 to 288 (ADGGTLFLDE). Residues 486-505 (WAATARQLELDSGNLHRLAK) constitute a DNA-binding region (H-T-H motif).

It participates in nitrogen metabolism; nitric oxide reduction. Its function is as follows. Required for the expression of anaerobic nitric oxide (NO) reductase, acts as a transcriptional activator for at least the norVW operon. Activation also requires sigma-54. The protein is Anaerobic nitric oxide reductase transcription regulator NorR of Vibrio vulnificus (strain CMCP6).